Here is a 408-residue protein sequence, read N- to C-terminus: Serine/threonine transporter SstT (408 aa).

9 helical membrane passes run 11 to 31, 43 to 63, 82 to 102, 141 to 161, 192 to 212, 216 to 236, 290 to 310, 316 to 336, and 363 to 383; these read LANG…VALA, FLGS…VFIL, IVVL…ILSM, ALMT…GLAL, IGIF…AIAG, LLAV…PLIV, IPLG…VLTL, LGIQ…AISA, and VAMQ…AAET.

The protein belongs to the dicarboxylate/amino acid:cation symporter (DAACS) (TC 2.A.23) family.

The protein resides in the cell inner membrane. It carries out the reaction L-serine(in) + Na(+)(in) = L-serine(out) + Na(+)(out). It catalyses the reaction L-threonine(in) + Na(+)(in) = L-threonine(out) + Na(+)(out). Involved in the import of serine and threonine into the cell, with the concomitant import of sodium (symport system). This is Serine/threonine transporter SstT from Shewanella oneidensis (strain ATCC 700550 / JCM 31522 / CIP 106686 / LMG 19005 / NCIMB 14063 / MR-1).